A 458-amino-acid chain; its full sequence is UDP-N-acetylmuramate--L-alanine ligase (458 aa).

118–124 serves as a coordination point for ATP; that stretch reads GTHGKTT.

It belongs to the MurCDEF family.

Its subcellular location is the cytoplasm. It catalyses the reaction UDP-N-acetyl-alpha-D-muramate + L-alanine + ATP = UDP-N-acetyl-alpha-D-muramoyl-L-alanine + ADP + phosphate + H(+). Its pathway is cell wall biogenesis; peptidoglycan biosynthesis. Cell wall formation. This chain is UDP-N-acetylmuramate--L-alanine ligase, found in Clostridium botulinum (strain Kyoto / Type A2).